The primary structure comprises 587 residues: Chaperonin CPN60, mitochondrial (587 aa).

Residues 1–32 (MYRLISSIASKARVARNCTSQIGSRLSSTRNY) constitute a mitochondrion transit peptide.

It belongs to the chaperonin (HSP60) family.

It localises to the mitochondrion. Its function is as follows. Implicated in mitochondrial protein import and macromolecular assembly. May facilitate the correct folding of imported proteins. May also prevent misfolding and promote the refolding and proper assembly of unfolded polypeptides generated under stress conditions in the mitochondrial matrix. This Brassica napus (Rape) protein is Chaperonin CPN60, mitochondrial.